The chain runs to 112 residues: MAVWEGKKYKMEKSEGFDDYMKALGVGMVLRKLGNSISPTVELVKNGDEYTFNTLSPSRTRRSSSSWAMEFDEETVDGRMVKSVCTFDGNKLIHEQKGEKRPRSCASSLPPI.

This sequence belongs to the calycin superfamily. Fatty-acid binding protein (FABP) family.

The sequence is that of Probable fatty acid-binding protein from Anopheles gambiae (African malaria mosquito).